The primary structure comprises 277 residues: Multiple sugar-binding transport system permease protein MsmG (277 aa).

6 consecutive transmembrane segments (helical) span residues 13 to 33 (YVLLTVGGILILIPLMVTVFS), 74 to 94 (VITVLSVLVVMLFIPAAAYSI), 110 to 130 (LLILGIFVPFQVIMIPITVMM), 141 to 161 (LIILYLTYAIPQTLFLYVGYI), 198 to 218 (TTLIINALWFWNDFMLPLLIL), and 243 to 263 (GPSFASYIVGIITITIVYLIF). The region spanning 69–263 (FWNSTVITVL…ITITIVYLIF (195 aa)) is the ABC transmembrane type-1 domain.

It belongs to the binding-protein-dependent transport system permease family. MalFG subfamily.

Its subcellular location is the cell membrane. Involved in a binding protein-dependent transport system responsible for the uptake of melibiose, raffinose and isomaltotriose. This chain is Multiple sugar-binding transport system permease protein MsmG (msmG), found in Streptococcus mutans serotype c (strain ATCC 700610 / UA159).